Consider the following 856-residue polypeptide: Wall-associated receptor kinase 17 (856 aa).

The N-terminal stretch at 1-42 is a signal peptide; the sequence is MPSRSPACRPRGRNRRSAADAVARPLALALILVSTLPRAAHS. N-linked (GlcNAc...) asparagine glycosylation is found at Asn-171 and Asn-234. Residues 297–334 form the EGF-like 1 domain; that stretch reads FEKLCKYGTCVDAPTGAGYLCKCPSGYDGNPYVSDGCQ. Disulfide bonds link Cys-301/Cys-306, Cys-319/Cys-333, Cys-339/Cys-353, Cys-347/Cys-362, and Cys-364/Cys-379. The EGF-like 2; calcium-binding domain occupies 335-380; the sequence is DINECRNYNSNNCTYQNLCNNTLGGYTCSCPENNIGDGYRTGTGCN. Residues Asn-346 and Asn-354 are each glycosylated (N-linked (GlcNAc...) asparagine). A glycan (N-linked (GlcNAc...) asparagine) is linked at Asn-380. Residues 452-470 traverse the membrane as a helical segment; that stretch reads VLGVSLVLMVTTTTAASCY. Residues 527–805 form the Protein kinase domain; the sequence is YSESRILGRG…VLQELRRSFT (279 aa). ATP-binding positions include 533 to 541 and Lys-555; that span reads LGRGGQGTV. Catalysis depends on Asp-652, which acts as the Proton acceptor. The tract at residues 816-844 is disordered; it reads SIQENSEQEEKHLHESRSIPSLQSSEVST. Positions 823–832 are enriched in basic and acidic residues; that stretch reads QEEKHLHESR. Residues 833-844 show a composition bias toward polar residues; it reads SIPSLQSSEVST.

Belongs to the protein kinase superfamily. Ser/Thr protein kinase family. In terms of assembly, interacts with WAK17 isoform 2; the interaction is direct. Interacts with LRR5; the interaction is direct. As to quaternary structure, interacts with WAK17 isoform 1; the interaction is direct. (Microbial infection) Interacts with G.zeae CFEM1 (via CFEM domain); the interaction is direct. Interacts with G.zeae CFEMN1; the interaction is direct. Interacts with G.zeae CFEM5; the interaction is direct. Mn(2+) is required as a cofactor. Mg(2+) serves as cofactor.

The protein resides in the cell membrane. The catalysed reaction is L-seryl-[protein] + ATP = O-phospho-L-seryl-[protein] + ADP + H(+). The enzyme catalyses L-threonyl-[protein] + ATP = O-phospho-L-threonyl-[protein] + ADP + H(+). Functionally, kinase that contributes to activation of the hypersensitive response, a form of programmed cell death, upon fungal infection. In terms of biological role, secreted protein that contributes to activation of the hypersensitive response, a form of programmed cell death, upon fungal infection. May sense the presence of fungal material and relay the signal to WAK17 isoform 1. This is Wall-associated receptor kinase 17 from Zea mays (Maize).